Reading from the N-terminus, the 122-residue chain is Large ribosomal subunit protein uL14 (122 aa).

Belongs to the universal ribosomal protein uL14 family. As to quaternary structure, part of the 50S ribosomal subunit. Forms a cluster with proteins L3 and L19. In the 70S ribosome, L14 and L19 interact and together make contacts with the 16S rRNA in bridges B5 and B8.

In terms of biological role, binds to 23S rRNA. Forms part of two intersubunit bridges in the 70S ribosome. The polypeptide is Large ribosomal subunit protein uL14 (Psychrobacter sp. (strain PRwf-1)).